We begin with the raw amino-acid sequence, 354 residues long: Probable L-ascorbate-6-phosphate lactonase UlaG (354 aa).

It belongs to the UlaG family. It depends on a divalent metal cation as a cofactor.

It is found in the cytoplasm. The catalysed reaction is L-ascorbate 6-phosphate + H2O = 3-dehydro-L-gulonate 6-phosphate. Its pathway is cofactor degradation; L-ascorbate degradation; D-xylulose 5-phosphate from L-ascorbate: step 1/4. Its function is as follows. Probably catalyzes the hydrolysis of L-ascorbate-6-P into 3-keto-L-gulonate-6-P. Is essential for L-ascorbate utilization under anaerobic conditions. This is Probable L-ascorbate-6-phosphate lactonase UlaG from Escherichia coli (strain SMS-3-5 / SECEC).